We begin with the raw amino-acid sequence, 58 residues long: MKTQDDGVLPPYDVNQLLGWDLNLSLFLGLCLMLLLAGSCLPSPGITGLSHGSNREDR.

A helical transmembrane segment spans residues 17–37; that stretch reads LLGWDLNLSLFLGLCLMLLLA.

Its subcellular location is the membrane. The chain is Putative transcript Y 13 protein (TTTY13) from Homo sapiens (Human).